Reading from the N-terminus, the 446-residue chain is MTEKILEKFDALEEKERILEAIRENNTDRHHRQRKKPLITPLLFDLHVQFGDTITPSASKIIKNKPHDLKNPKRSVSFKYKPNNSRSDLEESDLRPPILGTMINYEESKLMDHKEENLKSRPISLRYLKDKDETEYANPLPFPQLWSKHLCKKSAESSVPTPKLTNESNASKKENVSPPFTDQHESRTKKSMHSTDHSADSSTSRGKCPPKGITKESELTRNDEARKPHPVKQSIMLPLDCEDLLKNPKIKTIDLRPAVTVHTSMKQSHANPIIFYDTEYVQMLFLTKRFTPYAMKCTERNIVLEKNYEVLKVLFSDEPSAVSEPIQQKHLQVFSAEYAQKSINEKRKKKHDRLVSKKISPNTRYNLSQTFSSLSKKFVGYFDKDVTQGKSYKANRFERFSKTKPPPTRKLTTLPIKYDSKPLKNIFEIHKLNNMTPLDNLLGLRA.

Disordered regions lie at residues 63–95 (KNKP…SDLR) and 155–232 (AESS…HPVK). Residues 156-169 (ESSVPTPKLTNESN) are compositionally biased toward polar residues. Composition is skewed to basic and acidic residues over residues 182-199 (DQHE…DHSA) and 213-227 (ITKE…EARK).

This is an uncharacterized protein from Mus musculus (Mouse).